Reading from the N-terminus, the 395-residue chain is Pesticidal crystal protein Cry6Ba (395 aa).

It belongs to the cry6A endotoxin family.

Its function is as follows. Endotoxin with nematicidal activity. In Bacillus thuringiensis, this protein is Pesticidal crystal protein Cry6Ba (cry6Ba).